The sequence spans 774 residues: Fe(3+) dicitrate transport protein FecA (774 aa).

An N-terminal signal peptide occupies residues 1 to 33; sequence MTPLRVFRKTTPLVNTIRLSLLPLAGLSFSAFA. The TonB box motif lies at 56–63; sequence FTLSVDAS. Residues 129 to 250 form the TBDR plug domain; the sequence is DVFEHAGARD…VGGVVNFVTR (122 aa). In terms of domain architecture, TBDR beta-barrel spans 255-774; that stretch reads DFGIEAGVEG…TLYMQGSLKF (520 aa). A TonB C-terminal box motif is present at residues 757–774; it reads GIYAGQPRTLYMQGSLKF.

Belongs to the TonB-dependent receptor family. As to quaternary structure, interacts (via periplasmic N-terminus) with FecR (via periplasmic C-terminus).

Its subcellular location is the cell outer membrane. In terms of biological role, fecA is the outer membrane receptor protein in the Fe(3+) dicitrate transport system. The protein is Fe(3+) dicitrate transport protein FecA (fecA) of Escherichia coli (strain K12).